Consider the following 540-residue polypeptide: Phosphoenolpyruvate carboxykinase (ATP) (540 aa).

Arginine 65 is a substrate binding site. Position 87 is an N6-acetyllysine (lysine 87). Tyrosine 207 and lysine 213 together coordinate substrate. Residues lysine 213, histidine 232, and 248-256 contribute to the ATP site; that span reads GLSGTGKTT. Positions 213 and 232 each coordinate Mn(2+). Aspartate 269 provides a ligand contact to Mn(2+). ATP is bound by residues glutamate 297, arginine 333, 449–450, and threonine 455; that span reads RI. Position 333 (arginine 333) interacts with substrate. Lysine 523 is subject to N6-acetyllysine.

This sequence belongs to the phosphoenolpyruvate carboxykinase (ATP) family. As to quaternary structure, monomer. Mn(2+) serves as cofactor.

It is found in the cytoplasm. The catalysed reaction is oxaloacetate + ATP = phosphoenolpyruvate + ADP + CO2. It functions in the pathway carbohydrate biosynthesis; gluconeogenesis. Functionally, involved in the gluconeogenesis. Catalyzes the conversion of oxaloacetate (OAA) to phosphoenolpyruvate (PEP) through direct phosphoryl transfer between the nucleoside triphosphate and OAA. The polypeptide is Phosphoenolpyruvate carboxykinase (ATP) (Escherichia coli O127:H6 (strain E2348/69 / EPEC)).